Here is a 110-residue protein sequence, read N- to C-terminus: Iron-sulfur cluster assembly protein CyaY (110 aa).

This sequence belongs to the frataxin family.

Its function is as follows. Involved in iron-sulfur (Fe-S) cluster assembly. May act as a regulator of Fe-S biogenesis. This is Iron-sulfur cluster assembly protein CyaY from Variovorax paradoxus (strain S110).